A 91-amino-acid chain; its full sequence is Small ribosomal subunit protein bS20 (91 aa).

Belongs to the bacterial ribosomal protein bS20 family.

Its function is as follows. Binds directly to 16S ribosomal RNA. In Mycoplasma mobile (strain ATCC 43663 / 163K / NCTC 11711) (Mesomycoplasma mobile), this protein is Small ribosomal subunit protein bS20.